The primary structure comprises 1056 residues: ATP-dependent helicase wrn-1 (1056 aa).

The interval 1-102 (MISDDDDLPS…SSSDDSDQGD (102 aa)) is disordered. A run of 2 repeats spans residues 17 to 26 (NEELPETEPE) and 28 to 37 (NDELPETEPE). Positions 17–37 (NEELPETEPEDNDELPETEPE) are 2 X 10 AA repeats of N-[ED]-E-L-P-E-T-E-P-E. Over residues 19-38 (ELPETEPEDNDELPETEPES) the composition is skewed to acidic residues. Residues 43 to 53 (PTVTSNKTENQ) show a composition bias toward polar residues. Positions 54–63 (VADEDYDSFD) are enriched in acidic residues. Residues 236 to 406 (VRNVLGGKDQ…IANLRLRKPL (171 aa)) enclose the Helicase ATP-binding domain. 249–256 (MSTGYGKS) serves as a coordination point for ATP. Residues 348-351 (DEAH) carry the DEAH box motif. Positions 427–583 (MAEDLGLFMK…NLTMMLRQLE (157 aa)) constitute a Helicase C-terminal domain. Zn(2+)-binding residues include cysteine 591, cysteine 614, cysteine 615, and cysteine 618. Residues 749–771 (KEKAAPSTVPGASRSQSTKSSTE) are disordered. Residues 761 to 771 (SRSQSTKSSTE) show a composition bias toward polar residues. Residues 806–886 (PEKIDQLRSR…VQFSKETGIA (81 aa)) enclose the HRDC domain. The segment at 1018 to 1056 (QEKPDIQSMPSTSNPSTIKTVPSTPSSSLRAPPLKKFKL) is disordered. Residues 1025–1046 (SMPSTSNPSTIKTVPSTPSSSL) show a composition bias toward polar residues.

It belongs to the helicase family. RecQ subfamily. It depends on Zn(2+) as a cofactor.

The protein localises to the nucleus. It carries out the reaction Couples ATP hydrolysis with the unwinding of duplex DNA by translocating in the 3'-5' direction.. It catalyses the reaction ATP + H2O = ADP + phosphate + H(+). Essential for the formation of DNA replication focal centers; stably associates with foci elements generating binding sites for RP-A. Exhibits a magnesium-dependent ATP-dependent 3'-5' DNA-helicase activity. May be involved in the control of genomic stability. The polypeptide is ATP-dependent helicase wrn-1 (wrn-1) (Caenorhabditis elegans).